A 566-amino-acid polypeptide reads, in one-letter code: E3 ubiquitin-protein ligase Rnf220 (566 aa).

Lys277 participates in a covalent cross-link: Glycyl lysine isopeptide (Lys-Gly) (interchain with G-Cter in SUMO2). The interval Lys277–Arg300 is disordered. A compositionally biased stretch (basic and acidic residues) spans Ala291 to Arg300. Ser390 bears the Phosphoserine mark. A coiled-coil region spans residues Glu485–Lys513. The tract at residues Cys514–Ser522 is required for targeting to the cytoplasm. The RING-type zinc-finger motif lies at Cys514–Asn553.

As to quaternary structure, interacts with SIN3B. Interacts with CTNNB1 (via Armadillo repeats 2-8). Interacts with USP7 (via MATH domain). In terms of processing, auto-ubiquitinated; leads to proteasomal degradation. As to expression, in the brain, expressed in the hippocampus, telenecephalon and cerebellum. No expression in astro glial cells or in neural progenitor cells.

It is found in the cytoplasm. Its subcellular location is the nucleus. The catalysed reaction is S-ubiquitinyl-[E2 ubiquitin-conjugating enzyme]-L-cysteine + [acceptor protein]-L-lysine = [E2 ubiquitin-conjugating enzyme]-L-cysteine + N(6)-ubiquitinyl-[acceptor protein]-L-lysine.. It participates in protein modification; protein ubiquitination. In terms of biological role, E3 ubiquitin-protein ligase that promotes the ubiquitination and proteasomal degradation of SIN3B. Independently of its E3 ligase activity, acts as a CTNNB1 stabilizer through USP7-mediated deubiquitination of CTNNB1 and promotes Wnt signaling. Plays a critical role in the regulation of nuclear lamina. In Mus musculus (Mouse), this protein is E3 ubiquitin-protein ligase Rnf220 (Rnf220).